The following is a 162-amino-acid chain: Protein NrdI (162 aa).

Belongs to the NrdI family.

Its function is as follows. Probably involved in ribonucleotide reductase function. This is Protein NrdI from Streptococcus pyogenes serotype M28 (strain MGAS6180).